The sequence spans 85 residues: Large ribosomal subunit protein bL27 (85 aa).

The interval 1 to 22 (MAHKKAAGSTRNGRDSESKRLG) is disordered.

It belongs to the bacterial ribosomal protein bL27 family.

The protein is Large ribosomal subunit protein bL27 of Pseudoalteromonas translucida (strain TAC 125).